A 343-amino-acid chain; its full sequence is Tetraacyldisaccharide 4'-kinase (343 aa).

51–58 (HGGGAGKT) is a binding site for ATP.

The protein belongs to the LpxK family.

The enzyme catalyses a lipid A disaccharide + ATP = a lipid IVA + ADP + H(+). Its pathway is glycolipid biosynthesis; lipid IV(A) biosynthesis; lipid IV(A) from (3R)-3-hydroxytetradecanoyl-[acyl-carrier-protein] and UDP-N-acetyl-alpha-D-glucosamine: step 6/6. Its function is as follows. Transfers the gamma-phosphate of ATP to the 4'-position of a tetraacyldisaccharide 1-phosphate intermediate (termed DS-1-P) to form tetraacyldisaccharide 1,4'-bis-phosphate (lipid IVA). This is Tetraacyldisaccharide 4'-kinase from Rhodopseudomonas palustris (strain BisB18).